The following is a 235-amino-acid chain: Ribonuclease PH (235 aa).

Residues arginine 86 and 124–126 contribute to the phosphate site; that span reads GTR.

Belongs to the RNase PH family. As to quaternary structure, homohexameric ring arranged as a trimer of dimers.

The catalysed reaction is tRNA(n+1) + phosphate = tRNA(n) + a ribonucleoside 5'-diphosphate. Functionally, phosphorolytic 3'-5' exoribonuclease that plays an important role in tRNA 3'-end maturation. Removes nucleotide residues following the 3'-CCA terminus of tRNAs; can also add nucleotides to the ends of RNA molecules by using nucleoside diphosphates as substrates, but this may not be physiologically important. Probably plays a role in initiation of 16S rRNA degradation (leading to ribosome degradation) during starvation. The polypeptide is Ribonuclease PH (Francisella tularensis subsp. mediasiatica (strain FSC147)).